A 130-amino-acid chain; its full sequence is Small ribosomal subunit protein uS11 (130 aa).

This sequence belongs to the universal ribosomal protein uS11 family. In terms of assembly, part of the 30S ribosomal subunit. Interacts with proteins S7 and S18. Binds to IF-3.

Functionally, located on the platform of the 30S subunit, it bridges several disparate RNA helices of the 16S rRNA. Forms part of the Shine-Dalgarno cleft in the 70S ribosome. This chain is Small ribosomal subunit protein uS11, found in Nitrobacter hamburgensis (strain DSM 10229 / NCIMB 13809 / X14).